Consider the following 265-residue polypeptide: Large ribosomal subunit protein bL9m (265 aa).

The transit peptide at 1-49 (MAASVAPGVRTLWWAGAAWLRQGGIRELFRPRIEGSTPGRDFSLSHYQS) directs the protein to the mitochondrion.

It belongs to the bacterial ribosomal protein bL9 family. Component of the mitochondrial ribosome large subunit (39S) which comprises a 16S rRNA and about 50 distinct proteins.

The protein localises to the mitochondrion. In Mus musculus (Mouse), this protein is Large ribosomal subunit protein bL9m (Mrpl9).